A 131-amino-acid polypeptide reads, in one-letter code: UPF0102 protein CYA_0708 (131 aa).

The protein belongs to the UPF0102 family.

In Synechococcus sp. (strain JA-3-3Ab) (Cyanobacteria bacterium Yellowstone A-Prime), this protein is UPF0102 protein CYA_0708.